The primary structure comprises 146 residues: Hemoglobin subunit beta (146 aa).

The Globin domain occupies 2 to 146 (PFSAHEEKLI…VAAALSVEYY (145 aa)). Heme b is bound by residues H63 and H92.

This sequence belongs to the globin family. As to quaternary structure, heterotetramer of two alpha chains and two beta chains. When oxygenated in vitro, exists virtually only in polymeric form. When deoxygenated, forms tetramers, octamers and larger polymers. In terms of tissue distribution, red blood cells.

Its function is as follows. Involved in oxygen transport from the lung to the various peripheral tissues. This Paleosuchus palpebrosus (Cuvier's smooth-fronted caiman) protein is Hemoglobin subunit beta.